A 176-amino-acid polypeptide reads, in one-letter code: MNKNRQLAVNSNILFRKWLNGTREMVQDTIFHSRLHKVNQKIRSKRMFFEQDVHSNYFSFYKKKDFFKENPVSYVRNKDFTNVLKKLKKGKYYPDIFLDLHGLNQYQARKKLGQLIAICQKEKMFCAHIMHGYGKNILKKQIPFWLSQHPDIVAFHQAPKMFGNDAAIMVIIEIHS.

The Smr domain maps to 98–173 (LDLHGLNQYQ…NDAAIMVIIE (76 aa)).

This sequence belongs to the SmrB family. In terms of assembly, associates with collided ribosomes, but not with correctly translating polysomes.

Functionally, acts as a ribosome collision sensor. Detects stalled/collided disomes (pairs of ribosomes where the leading ribosome is stalled and a second ribosome has collided with it) and endonucleolytically cleaves mRNA at the 5' boundary of the stalled ribosome. Stalled/collided disomes form a new interface (primarily via the 30S subunits) that binds SmrB. Cleaved mRNA becomes available for tmRNA ligation, leading to ribosomal subunit dissociation and rescue of stalled ribosomes. The sequence is that of Ribosome rescue factor SmrB from Buchnera aphidicola subsp. Schizaphis graminum (strain Sg).